The following is an 843-amino-acid chain: MFGFLKNLLDDNARDIRRLQKTVDRINSMEPEWQRLSDADLQHKTVEFRQRLENGESLDDLLPEAFATVREASRRVLGMRHFDVQLIGGMVLHQGRIAEMRTGEGKTLVATLPSYLNALTGRGVHVVTVNDYLAKRDAEWMGRIHRFLGLQVGLIIHGLDFAERREAYAADITYGTNNEFGFDYLRDNMVIQPQHMVQRELHYAIVDEVDSILIDEARTPLIISGQANKPTEKYYAVARIIPRLTKDVDYKVDEKAHSVVLTEEGVSRVEKMLGIDNLADSLDWAHHVNQGLKAHALMRRDRDYVVKDGEVIIVDEFTGRLMFGRRYSEGLHQAIEAKEGLEIQNESQTLATITLQNYFRMYDKLSGMTGTAKTEEPEFMQIYKMDVVQIPTNKPMQRKDLPDVVYRTEEGKFNAVVEEIVQSFRRGQPVLVGTVSIEKSEQLSDKLKRRGVPHQVLNAKHHEKEAEIVKNAGQRGMVTIATNMAGRGTDIILGEGVAELGGLYVIGTERHEARRIDNQLRGRSGRQGDPGQTRFYVSLEDDLMRLFGAENIQGVMDRLGMDDSMPIESGMITRAIENAQRRVEARNFDIRKHVLQYDDVMNQQREVIYDQRKKVLNGENLRDTVFDFIDTLVENMVNRFAGEEKYVENWDLPAMLAYAEETFQIAVTAEDLHEMEKEEVIAFFQEKAQERYSQREQELGLETIRELERIILLRVVDSHWMDHLDAMDHLRHGIGLRAYGQKDPLVEYKYEAYSMFQEMIASVQEEFLRYMFRVNVVVAQAEEEKQEAEAEAEAETVLKNAVENRSDDSLPKQPVKAEPRVGRNDPCPCGSGKKYKKCCGVKG.

ATP is bound by residues Gln-85, 103 to 107, and Asp-490; that span reads GEGKT. The segment at 799 to 834 is disordered; it reads KNAVENRSDDSLPKQPVKAEPRVGRNDPCPCGSGKK. The segment covering 802–823 has biased composition (basic and acidic residues); sequence VENRSDDSLPKQPVKAEPRVGR. Zn(2+)-binding residues include Cys-827, Cys-829, Cys-838, and Cys-839.

The protein belongs to the SecA family. In terms of assembly, monomer and homodimer. Part of the essential Sec protein translocation apparatus which comprises SecA, SecYEG and auxiliary proteins SecDF. Other proteins may also be involved. It depends on Zn(2+) as a cofactor.

It is found in the cell membrane. The protein localises to the cytoplasm. It catalyses the reaction ATP + H2O + cellular proteinSide 1 = ADP + phosphate + cellular proteinSide 2.. Part of the Sec protein translocase complex. Interacts with the SecYEG preprotein conducting channel. Has a central role in coupling the hydrolysis of ATP to the transfer of proteins into and across the cell membrane, serving as an ATP-driven molecular motor driving the stepwise translocation of polypeptide chains across the membrane. The sequence is that of Protein translocase subunit SecA from Heliobacterium modesticaldum (strain ATCC 51547 / Ice1).